The chain runs to 176 residues: Disulfide bond formation protein B (176 aa).

The Cytoplasmic portion of the chain corresponds to 1–14 (MLRFLNQCSQGRGA). A helical transmembrane segment spans residues 15 to 31 (WLLMAFTALALELTALW). The Periplasmic segment spans residues 32–49 (FQHVMLLKPCVLCIYERC). Cys-41 and Cys-44 form a disulfide bridge. Residues 50 to 65 (ALFGVLGAALIGAIAP) form a helical membrane-spanning segment. The Cytoplasmic portion of the chain corresponds to 66–71 (KTPLRY). A helical transmembrane segment spans residues 72–89 (VAMVIWLYSAFRGVQLTY). The Periplasmic portion of the chain corresponds to 90–144 (EHTMLQLYPSPFATCDFMVRFPEWLPLDKWVPQVFVASGDCAERQWDFLGMEMPQ). Cys-104 and Cys-130 are disulfide-bonded. Residues 145–163 (WLLGIFIAYLIVAVLVVIS) form a helical membrane-spanning segment. Topologically, residues 164–176 (QPFKAKKRDLFGR) are cytoplasmic.

Belongs to the DsbB family.

The protein localises to the cell inner membrane. Its function is as follows. Required for disulfide bond formation in some periplasmic proteins such as PhoA or OmpA. Acts by oxidizing the DsbA protein. The sequence is that of Disulfide bond formation protein B from Shigella flexneri.